Consider the following 378-residue polypeptide: Acetylornithine deacetylase (378 aa).

His76 contributes to the Zn(2+) binding site. Asp78 is an active-site residue. Asp108 serves as a coordination point for Zn(2+). Glu140 is a catalytic residue. Glu141, Glu165, and His351 together coordinate Zn(2+).

The protein belongs to the peptidase M20A family. ArgE subfamily. Homodimer. The cofactor is Zn(2+). Requires Co(2+) as cofactor. It depends on glutathione as a cofactor.

The protein localises to the cytoplasm. The catalysed reaction is N(2)-acetyl-L-ornithine + H2O = L-ornithine + acetate. The protein operates within amino-acid biosynthesis; L-arginine biosynthesis; L-ornithine from N(2)-acetyl-L-ornithine (linear): step 1/1. Functionally, catalyzes the hydrolysis of the amide bond of N(2)-acetylated L-amino acids. Cleaves the acetyl group from N-acetyl-L-ornithine to form L-ornithine, an intermediate in L-arginine biosynthesis pathway, and a branchpoint in the synthesis of polyamines. In Vibrio vulnificus (strain CMCP6), this protein is Acetylornithine deacetylase.